The primary structure comprises 1040 residues: Multidrug resistance protein MdtB (1040 aa).

Transmembrane regions (helical) follow at residues 25-45 (LLMA…PVAA), 347-367 (LMLA…NIPA), 369-389 (IIPG…MVFL), 396-416 (LTLM…IVVI), 440-460 (IGFT…PLLF), 472-492 (FAVT…TLTP), 537-557 (WLTL…WIVI), 863-883 (LGST…VLGV), 888-908 (FIHP…ALLA), 910-930 (IIAG…LIGI), 968-988 (ILMT…STGV), and 998-1018 (IAMV…TPVI).

It belongs to the resistance-nodulation-cell division (RND) (TC 2.A.6) family. MdtB subfamily. As to quaternary structure, part of a tripartite efflux system composed of MdtA, MdtB and MdtC. MdtB forms a heteromultimer with MdtC.

It localises to the cell inner membrane. The protein is Multidrug resistance protein MdtB of Salmonella dublin (strain CT_02021853).